The sequence spans 65 residues: Hirudin-3 (65 aa).

The tract at residues 1–3 (VVY) is interaction with thrombin active site. Cystine bridges form between cysteine 6–cysteine 14, cysteine 16–cysteine 28, and cysteine 22–cysteine 39. The interval 39-65 (CVTGEGTPKPQSHNDGDFEEIPEEYLQ) is disordered. The O-linked (GalNAc...) threonine glycan is linked to threonine 45. Positions 55 to 65 (DFEEIPEEYLQ) are interaction with fibrinogen-binding exosite of thrombin. The span at 55–65 (DFEEIPEEYLQ) shows a compositional bias: acidic residues. Tyrosine 63 is modified (sulfotyrosine).

This sequence belongs to the protease inhibitor I14 (hirudin) family.

The protein resides in the secreted. In terms of biological role, hirudin is a potent thrombin-specific protease inhibitor. It forms a stable non-covalent complex with alpha-thrombin, thereby abolishing its ability to cleave fibrinogen. This is Hirudin-3 from Hirudo medicinalis (Medicinal leech).